The following is a 191-amino-acid chain: Bcl-2-like protein 10 (191 aa).

The short motif at Leu79–Gly98 is the BH1 element. Lys112 participates in a covalent cross-link: Glycyl lysine isopeptide (Lys-Gly) (interchain with G-Cter in ubiquitin). The BH2 motif lies at Arg144–Cys155. The helical transmembrane segment at Phe166 to Ala183 threads the bilayer.

This sequence belongs to the Bcl-2 family. Interacts with BAX. Interacts with BCL2 and BCL2L1/BCLX. Interacts with APAF1. Interacts with ITPR1, ITPR2 and ITPR3; the interaction with ITPR1 is increased in the presence of AHCLY1. Interacts with AHCYL1. Interacts with HIP1R (via ENTH and I/LWEQ domains). Interacts with CASP9. Interacts with BCL2L11/BIM. Interacts with BIK. Interacts with UBQLN4. Interacts with NME2/NM23-H2. Interacts with PMAIP1/NOXA. Interacts with TPX2. Interacts with UBQLN1; in the cytoplasm. Interacts (via BH1 domain) with BECN1. Ca(2+) serves as cofactor. In terms of processing, monoubiquitinated by UBQLN1; results in stabilization of BCL2L10 protein abundance and in relocalization from mitochondria to cytoplasm. As to expression, expressed in multiple embryonic tissues. Restricted to the ovary and testis in adult mice.

Its subcellular location is the mitochondrion. It localises to the nucleus membrane. The protein resides in the endoplasmic reticulum. The protein localises to the cytoplasm. It is found in the cytoskeleton. Its subcellular location is the spindle. Functionally, promotes cell survival by suppressing apoptosis induced by BAX but not BAK. Increases binding of AHCYL1/IRBIT to ITPR1. Reduces ITPR1-mediated calcium release from the endoplasmic reticulum cooperatively with AHCYL1/IRBIT under normal cellular conditions. Under apoptotic stress conditions, dissociates from ITPR1 and is displaced from mitochondria-associated endoplasmic reticulum membranes, leading to increased Ca(2+) transfer to mitochondria which promotes apoptosis. Required for the correct formation of the microtubule organizing center during oocyte cell division, potentially via regulation of protein abundance and localization of other microtubule organizing center components such as AURKA and TPX2. The polypeptide is Bcl-2-like protein 10 (Mus musculus (Mouse)).